The primary structure comprises 172 residues: Small ribosomal subunit protein uS5 (172 aa).

In terms of domain architecture, S5 DRBM spans 17–80 (MREKMIAVNR…EEARRKMIKV (64 aa)).

The protein belongs to the universal ribosomal protein uS5 family. As to quaternary structure, part of the 30S ribosomal subunit. Contacts proteins S4 and S8.

In terms of biological role, with S4 and S12 plays an important role in translational accuracy. Located at the back of the 30S subunit body where it stabilizes the conformation of the head with respect to the body. The sequence is that of Small ribosomal subunit protein uS5 from Herminiimonas arsenicoxydans.